The primary structure comprises 170 residues: Ribulose bisphosphate carboxylase small subunit, chloroplastic (170 aa).

Transit peptides (chloroplast) lie at residues 1 to 46 (MAPT…GRIR) and 1 to 47 (MAPT…RIRC).

Belongs to the RuBisCO small chain family. In terms of assembly, heterohexadecamer of 8 large and 8 small subunits.

It is found in the plastid. Its subcellular location is the chloroplast. Functionally, ruBisCO catalyzes two reactions: the carboxylation of D-ribulose 1,5-bisphosphate, the primary event in carbon dioxide fixation, as well as the oxidative fragmentation of the pentose substrate. Both reactions occur simultaneously and in competition at the same active site. Although the small subunit is not catalytic it is essential for maximal activity. This is Ribulose bisphosphate carboxylase small subunit, chloroplastic from Zea mays (Maize).